A 269-amino-acid polypeptide reads, in one-letter code: MTDKPGIVITGASGRMGQMLIKTVLDSDKAELAGVVEREGHDWVGQDIGIAMGGAALGVVVTDDAGSAFAGAQAVIDFTAPQATIAFSKLAAEAGCVHVIGTTGMSEAEIAQLDPAAQDTVLVRAGNMSLGVNLLVQLTKKVAAALDEDFDIEVIEAHHHHKVDAPSGTALMLGEAAAEGRGVALAEVSDRGRDGITGARKKGDIGFSAIRGGDIVGEHDVLFAAAGERIVLRHMATDRAIFARGALKAALWGQGKDAGAYDMIDVLGL.

NAD(+)-binding positions include 11 to 16 and E37; that span reads GASGRM. Residue R38 participates in NADP(+) binding. NAD(+) contacts are provided by residues 101–103 and 125–128; these read GTT and AGNM. The Proton donor/acceptor role is filled by H158. Residue H159 participates in (S)-2,3,4,5-tetrahydrodipicolinate binding. K162 acts as the Proton donor in catalysis. 168-169 is a (S)-2,3,4,5-tetrahydrodipicolinate binding site; sequence GT.

This sequence belongs to the DapB family.

It is found in the cytoplasm. The enzyme catalyses (S)-2,3,4,5-tetrahydrodipicolinate + NAD(+) + H2O = (2S,4S)-4-hydroxy-2,3,4,5-tetrahydrodipicolinate + NADH + H(+). It catalyses the reaction (S)-2,3,4,5-tetrahydrodipicolinate + NADP(+) + H2O = (2S,4S)-4-hydroxy-2,3,4,5-tetrahydrodipicolinate + NADPH + H(+). The protein operates within amino-acid biosynthesis; L-lysine biosynthesis via DAP pathway; (S)-tetrahydrodipicolinate from L-aspartate: step 4/4. Catalyzes the conversion of 4-hydroxy-tetrahydrodipicolinate (HTPA) to tetrahydrodipicolinate. This is 4-hydroxy-tetrahydrodipicolinate reductase from Ruegeria sp. (strain TM1040) (Silicibacter sp.).